The primary structure comprises 474 residues: MKRQADRSGTVVAVRGGIVDARFDGEMPALHSLLLAGAQDEIVVEVMLHLDGGHVRGNALTPTQGLACGDTIKDSGAPLQAPVGQAILGRVFNVFGQPIDRREPPDGCRWRSVLTKPAGLTERSSKTEMFITGIKAIDVLAPLERGGKAGLFGGAGVGKTVLITELIHNMVGQHEGVSLFCGIGERCREGEELFREMREAGVLDNTVMVFGQMNEPPGARFRVGLTALTMAEYFRDDQGRDVLLLIDNIFRFIQAGMEISGLLGLMPSRLGYQPTMGTELAELQERISSTRHAAITSIQAVYVPADDFTDPAAVHTFSHLSASIVLSRRRASEGLYPAIDPLASTSNILNPRIVGERHYRLAQEIRRTLATYEELKDIIAMLGLEELSREDRRIVFRARRLERFLTQPFHTTQQFTGMQGRTVALDAALNGCEAILNDEFSEAPEKILYMIGGLEEARQRLREEETAGHGEEPP.

153 to 160 (GGAGVGKT) serves as a coordination point for ATP.

Belongs to the ATPase alpha/beta chains family. F-type ATPases have 2 components, CF(1) - the catalytic core - and CF(0) - the membrane proton channel. CF(1) has five subunits: alpha(3), beta(3), gamma(1), delta(1), epsilon(1). CF(0) has three main subunits: a(1), b(2) and c(9-12). The alpha and beta chains form an alternating ring which encloses part of the gamma chain. CF(1) is attached to CF(0) by a central stalk formed by the gamma and epsilon chains, while a peripheral stalk is formed by the delta and b chains.

It localises to the cell inner membrane. The catalysed reaction is ATP + H2O + 4 H(+)(in) = ADP + phosphate + 5 H(+)(out). In terms of biological role, produces ATP from ADP in the presence of a proton gradient across the membrane. The catalytic sites are hosted primarily by the beta subunits. This is ATP synthase subunit beta 2 from Syntrophotalea carbinolica (strain DSM 2380 / NBRC 103641 / GraBd1) (Pelobacter carbinolicus).